The chain runs to 168 residues: G/U mismatch-specific DNA glycosylase (168 aa).

This sequence belongs to the uracil-DNA glycosylase (UDG) superfamily. TDG/mug family. In terms of assembly, binds DNA as a monomer.

Its subcellular location is the cytoplasm. The catalysed reaction is Specifically hydrolyzes mismatched double-stranded DNA and polynucleotides, releasing free uracil.. Functionally, excises ethenocytosine and uracil, which can arise by alkylation or deamination of cytosine, respectively, from the corresponding mispairs with guanine in ds-DNA. It is capable of hydrolyzing the carbon-nitrogen bond between the sugar-phosphate backbone of the DNA and the mispaired base. The complementary strand guanine functions in substrate recognition. Required for DNA damage lesion repair in stationary-phase cells. This chain is G/U mismatch-specific DNA glycosylase, found in Klebsiella pneumoniae subsp. pneumoniae (strain ATCC 700721 / MGH 78578).